Here is a 376-residue protein sequence, read N- to C-terminus: Alkanesulfonate monooxygenase (376 aa).

Belongs to the SsuD family.

It carries out the reaction an alkanesulfonate + FMNH2 + O2 = an aldehyde + FMN + sulfite + H2O + 2 H(+). Functionally, catalyzes the desulfonation of aliphatic sulfonates. The sequence is that of Alkanesulfonate monooxygenase from Bacillus licheniformis (strain ATCC 14580 / DSM 13 / JCM 2505 / CCUG 7422 / NBRC 12200 / NCIMB 9375 / NCTC 10341 / NRRL NRS-1264 / Gibson 46).